A 302-amino-acid polypeptide reads, in one-letter code: Pathogenicity locus probable regulatory protein HrpS (302 aa).

A Sigma-54 factor interaction domain is found at 9–237; sequence DDLDAERVPN…LKAAAKRHVL (229 aa). ATP is bound by residues 37 to 44 and 99 to 108; these read GETGTGKD and AQGGTLYLDE. Residues 279–298 constitute a DNA-binding region (H-T-H motif); sequence IDAASLELDIPRRTLYRRIK.

Regulates the activation of the sigma factor HrpL which itself induces the expression of hprD as well as other hrp loci which are involved in plant pathogenicity, hrmA and avr genes. Probably interacts with sigma-54. This is Pathogenicity locus probable regulatory protein HrpS (hrpS) from Pseudomonas syringae pv. syringae.